Reading from the N-terminus, the 234-residue chain is MAPIRVVLLDIEGTVCPISFVKDVLFPYALEALPGTLKAKWDSPEFAPYRAAFPAEHAGSQESLAAHVRDLMSKDLKISYLKSLQGYLWETGYRNGELKAPLFLDVAPQLARWREHGGVKVMIYSSGSVPAQKLLFGHTNGEPSDILPWLSDFFDTVNAGPKQEKASYEKIAAKHQEYPIGEWLFLSDNVKEVEAAKQAGMQSYIVDRPGNAELSEEARKEHRVIKSFEEIGDL.

Residues D10 and E12 each coordinate Mg(2+). Residues S125 to S126 and K162 contribute to the substrate site. Residue D188 participates in Mg(2+) binding.

This sequence belongs to the HAD-like hydrolase superfamily. MasA/MtnC family. Monomer. It depends on Mg(2+) as a cofactor.

It is found in the cytoplasm. The protein resides in the nucleus. The catalysed reaction is 5-methylsulfanyl-2,3-dioxopentyl phosphate + H2O = 1,2-dihydroxy-5-(methylsulfanyl)pent-1-en-3-one + phosphate. It functions in the pathway amino-acid biosynthesis; L-methionine biosynthesis via salvage pathway; L-methionine from S-methyl-5-thio-alpha-D-ribose 1-phosphate: step 3/6. It participates in amino-acid biosynthesis; L-methionine biosynthesis via salvage pathway; L-methionine from S-methyl-5-thio-alpha-D-ribose 1-phosphate: step 4/6. In terms of biological role, bifunctional enzyme that catalyzes the enolization of 2,3-diketo-5-methylthiopentyl-1-phosphate (DK-MTP-1-P) into the intermediate 2-hydroxy-3-keto-5-methylthiopentenyl-1-phosphate (HK-MTPenyl-1-P), which is then dephosphorylated to form the acireductone 1,2-dihydroxy-3-keto-5-methylthiopentene (DHK-MTPene). The sequence is that of Enolase-phosphatase E1 (utr4) from Neurospora crassa (strain ATCC 24698 / 74-OR23-1A / CBS 708.71 / DSM 1257 / FGSC 987).